A 505-amino-acid chain; its full sequence is Metalloprotease TIKI1 (505 aa).

An N-terminal signal peptide occupies residues Met1 to Ala19. Over Ala20–Met477 the chain is Extracellular. Residues Asn220, Asn229, Asn278, and Asn336 are each glycosylated (N-linked (GlcNAc...) asparagine). Residues Pro389–Arg428 form a disordered region. Residues Phe419 to Arg428 are compositionally biased toward basic residues. Residues Val478–Phe498 form a helical membrane-spanning segment. The Cytoplasmic portion of the chain corresponds to Gln499–Leu505.

The protein belongs to the TIKI family. The cofactor is Mn(2+). Requires Co(2+) as cofactor.

It is found in the cell membrane. Its function is as follows. Metalloprotease that acts as a negative regulator of the Wnt signaling pathway by mediating the cleavage of the 8 N-terminal residues of a subset of Wnt proteins. Following cleavage, Wnt proteins become oxidized and form large disulfide-bond oligomers, leading to their inactivation. Able to cleave WNT3A, WNT5, but not WNT11. Required for head formation. The sequence is that of Metalloprotease TIKI1 (TRABD2A) from Homo sapiens (Human).